The primary structure comprises 508 residues: Photosystem II CP47 reaction center protein (508 aa).

6 helical membrane-spanning segments follow: residues S21 to S36, I101 to W115, G140 to F156, I203 to S218, V237 to V252, and S457 to R472.

Belongs to the PsbB/PsbC family. PsbB subfamily. As to quaternary structure, PSII is composed of 1 copy each of membrane proteins PsbA, PsbB, PsbC, PsbD, PsbE, PsbF, PsbH, PsbI, PsbJ, PsbK, PsbL, PsbM, PsbT, PsbX, PsbY, PsbZ, Psb30/Ycf12, at least 3 peripheral proteins of the oxygen-evolving complex and a large number of cofactors. It forms dimeric complexes. Binds multiple chlorophylls. PSII binds additional chlorophylls, carotenoids and specific lipids. is required as a cofactor.

The protein localises to the plastid. The protein resides in the chloroplast thylakoid membrane. In terms of biological role, one of the components of the core complex of photosystem II (PSII). It binds chlorophyll and helps catalyze the primary light-induced photochemical processes of PSII. PSII is a light-driven water:plastoquinone oxidoreductase, using light energy to abstract electrons from H(2)O, generating O(2) and a proton gradient subsequently used for ATP formation. In Nasturtium officinale (Watercress), this protein is Photosystem II CP47 reaction center protein.